A 514-amino-acid chain; its full sequence is Maturase K (514 aa).

Belongs to the intron maturase 2 family. MatK subfamily.

It is found in the plastid. The protein resides in the chloroplast. Functionally, usually encoded in the trnK tRNA gene intron. Probably assists in splicing its own and other chloroplast group II introns. This Dioon spinulosum (Gum palm) protein is Maturase K.